Reading from the N-terminus, the 226-residue chain is Translation initiation factor 6 (226 aa).

The protein belongs to the eIF-6 family.

In terms of biological role, binds to the 50S ribosomal subunit and prevents its association with the 30S ribosomal subunit to form the 70S initiation complex. The polypeptide is Translation initiation factor 6 (Haloquadratum walsbyi (strain DSM 16790 / HBSQ001)).